The sequence spans 517 residues: Dopamine receptor 4 (517 aa).

Topologically, residues 1–46 (MLAYGSDPNAEDLYITMTPSVSTENDTTVWATEEPAAIVWRHPLLA) are extracellular. An N-linked (GlcNAc...) asparagine glycan is attached at Asn25. A helical membrane pass occupies residues 47 to 67 (IALFSICLLTVAGNCLVVIAV). Residues 68–77 (CTKKYLRNPT) are Cytoplasmic-facing. A helical transmembrane segment spans residues 78–98 (GYLIISLAIADLIVGVIVMPM). At 99 to 108 (NSLFEIANHT) the chain is on the extracellular side. The N-linked (GlcNAc...) asparagine glycan is linked to Asn106. The chain crosses the membrane as a helical span at residues 109–129 (WLFGLMMCDVFHAMDILASTA). Topologically, residues 130–159 (SIWNLCVISLDRYMAGQDPIGYRDKVSKRR) are cytoplasmic. A helical transmembrane segment spans residues 160 to 180 (ILMAILSVWVLSAILSFPGII). Residues 181–209 (WWRTSSPHLYEDQSQCLFTDSKMYVSFSS) are Extracellular-facing. A helical membrane pass occupies residues 210-230 (LVSFYIPLFLILFAYGKVYII). Over 231–409 (ATRHSKGMRM…YVHEQRAART (179 aa)) the chain is Cytoplasmic. A disordered region spans residues 309–339 (NDRGEHNNNNTVRQPLLRGTEGCHSDSISRS). A helical membrane pass occupies residues 410–430 (LSIVVGAFILCWTPFFVFTPL). Topologically, residues 431–442 (TAFCESCFSNKE) are extracellular. Residues 443–463 (TIFTFVTWAGHLNSMLNPLIY) form a helical membrane-spanning segment. The Cytoplasmic segment spans residues 464–517 (SRFSRDFRRAFKQILTCQRQQKVKTAFKTPLSLVFTQLISVTQMWEQPPNTSIE).

Belongs to the G-protein coupled receptor 1 family. Expressed in pharyngeal neurons I1 and I2, neurons ASG, AVL, CAN, PQR, vulva, intestine, rectal glands and rectal epithelial glands. Also expressed in neurons in ray 8 in males.

The protein resides in the cell membrane. Receptor for dopamine. The activity of this receptor is mediated by G proteins which activate adenylyl cyclase. In terms of antagonist responses, would be classed with the D1-like dopamine receptor group. The polypeptide is Dopamine receptor 4 (dop-4) (Caenorhabditis elegans).